Consider the following 542-residue polypeptide: Putative beta-glucosidase 23 (542 aa).

The first 29 residues, 1–29 (MAACTSSLVSLLLLLLLLLLLLVAGEATA), serve as a signal peptide directing secretion. Asn34 is a glycosylation site (N-linked (GlcNAc...) asparagine). Gln88 is a binding site for a beta-D-glucoside. An N-linked (GlcNAc...) asparagine glycan is attached at Asn135. Residue His216 participates in a beta-D-glucoside binding. Glu262 functions as the Proton donor in the catalytic mechanism. Cys281 and Cys289 form a disulfide bridge. Tyr405 provides a ligand contact to a beta-D-glucoside. Residue Asn445 is glycosylated (N-linked (GlcNAc...) asparagine). 2 residues coordinate a beta-D-glucoside: Trp476 and Phe492.

The protein belongs to the glycosyl hydrolase 1 family.

The catalysed reaction is Hydrolysis of terminal, non-reducing beta-D-glucosyl residues with release of beta-D-glucose.. This is Putative beta-glucosidase 23 (BGLU23) from Oryza sativa subsp. japonica (Rice).